Here is a 172-residue protein sequence, read N- to C-terminus: Adenine phosphoribosyltransferase (172 aa).

Belongs to the purine/pyrimidine phosphoribosyltransferase family. Homodimer.

It localises to the cytoplasm. The catalysed reaction is AMP + diphosphate = 5-phospho-alpha-D-ribose 1-diphosphate + adenine. It functions in the pathway purine metabolism; AMP biosynthesis via salvage pathway; AMP from adenine: step 1/1. Functionally, catalyzes a salvage reaction resulting in the formation of AMP, that is energically less costly than de novo synthesis. This is Adenine phosphoribosyltransferase from Synechocystis sp. (strain ATCC 27184 / PCC 6803 / Kazusa).